A 60-amino-acid chain; its full sequence is Large ribosomal subunit protein uL30 (60 aa).

It belongs to the universal ribosomal protein uL30 family. Part of the 50S ribosomal subunit.

This is Large ribosomal subunit protein uL30 from Streptococcus pyogenes serotype M1.